A 247-amino-acid polypeptide reads, in one-letter code: MIKHIEAFLASKTISENTLKSYRYDLNQFLMLIDHKLSDEKLVLYQKSLNHLSASAKKRKFSTVNQFLHYLYKVNVTDRFFELSGKVSLPSTKVPFTYQLDDKRFYQKTQHPSGQLIALLILELGLLPSELSKLRLSEIDLDFQLIRVDNGSTVKVLSFSQAILKHLSEMEVGSTYLFENKGKPYSRQWFFNQLNAFLLEIGYDQLSAQSLREQFIIREKEKGTSLMELTQKLGLKSPITLEKYYRL.

The Core-binding (CB) domain maps to 1-72 (MIKHIEAFLA…TVNQFLHYLY (72 aa)). Positions 91-247 (STKVPFTYQL…PITLEKYYRL (157 aa)) constitute a Tyr recombinase domain. Arginine 212 is a catalytic residue. The active-site O-(3'-phospho-DNA)-tyrosine intermediate is the tyrosine 244.

Belongs to the 'phage' integrase family. XerD-like subfamily.

The protein resides in the cytoplasm. Its function is as follows. Putative tyrosine recombinase. Not involved in the cutting and rejoining of the recombining DNA molecules on dif(SL) site. The sequence is that of Tyrosine recombinase XerD-like from Streptococcus uberis (strain ATCC BAA-854 / 0140J).